Here is a 452-residue protein sequence, read N- to C-terminus: Pup--protein ligase (452 aa).

E9 contributes to the Mg(2+) binding site. R53 is a binding site for ATP. Y55 lines the Mg(2+) pocket. D57 acts as the Proton acceptor in catalysis. Mg(2+) is bound at residue E63. Residues T66 and W419 each contribute to the ATP site.

Belongs to the Pup ligase/Pup deamidase family. Pup-conjugating enzyme subfamily.

The catalysed reaction is ATP + [prokaryotic ubiquitin-like protein]-L-glutamate + [protein]-L-lysine = ADP + phosphate + N(6)-([prokaryotic ubiquitin-like protein]-gamma-L-glutamyl)-[protein]-L-lysine.. It functions in the pathway protein degradation; proteasomal Pup-dependent pathway. It participates in protein modification; protein pupylation. In terms of biological role, catalyzes the covalent attachment of the prokaryotic ubiquitin-like protein modifier Pup to the proteasomal substrate proteins, thereby targeting them for proteasomal degradation. This tagging system is termed pupylation. The ligation reaction involves the side-chain carboxylate of the C-terminal glutamate of Pup and the side-chain amino group of a substrate lysine. The polypeptide is Pup--protein ligase (Salinispora tropica (strain ATCC BAA-916 / DSM 44818 / JCM 13857 / NBRC 105044 / CNB-440)).